A 430-amino-acid chain; its full sequence is Adenylosuccinate synthetase (430 aa).

GTP contacts are provided by residues 12–18 (GDEGKGK) and 40–42 (GHT). Asp13 acts as the Proton acceptor in catalysis. Mg(2+) is bound by residues Asp13 and Gly40. IMP contacts are provided by residues 13-16 (DEGK), 38-41 (NAGH), Thr128, Arg142, Gln223, Thr238, and Arg302. His41 serves as the catalytic Proton donor. 298–304 (TTTGRPR) contacts substrate. GTP is bound by residues Arg304, 330-332 (LLD), and 412-414 (SVG).

The protein belongs to the adenylosuccinate synthetase family. Homodimer. The cofactor is Mg(2+).

The protein resides in the cytoplasm. It catalyses the reaction IMP + L-aspartate + GTP = N(6)-(1,2-dicarboxyethyl)-AMP + GDP + phosphate + 2 H(+). The protein operates within purine metabolism; AMP biosynthesis via de novo pathway; AMP from IMP: step 1/2. Plays an important role in the de novo pathway of purine nucleotide biosynthesis. Catalyzes the first committed step in the biosynthesis of AMP from IMP. This is Adenylosuccinate synthetase from Listeria welshimeri serovar 6b (strain ATCC 35897 / DSM 20650 / CCUG 15529 / CIP 8149 / NCTC 11857 / SLCC 5334 / V8).